The sequence spans 269 residues: UPF0494 membrane protein C1348.01 (269 aa).

The next 4 membrane-spanning stretches (helical) occupy residues 107 to 127 (WPLL…KFEV), 144 to 164 (IWVP…SLIF), 177 to 197 (GVII…IAAL), and 201 to 221 (ITGL…LSLG).

This sequence belongs to the UPF0494 family.

Its subcellular location is the vacuole membrane. The sequence is that of UPF0494 membrane protein C1348.01 from Schizosaccharomyces pombe (strain 972 / ATCC 24843) (Fission yeast).